The following is a 434-amino-acid chain: AT-rich interactive domain-containing protein 5 (434 aa).

The tract at residues 1-120 is disordered; sequence MMADTEMQEQ…SSPHVPEESV (120 aa). Composition is skewed to basic and acidic residues over residues 25–37, 43–54, and 78–90; these read ELEK…ERPK, DTTHTLDSDVHL, and RNGD…KKIT. Over residues 92 to 102 the composition is skewed to polar residues; sequence DGGQEETTLGE. The ARID domain occupies 142–233; the sequence is PQDQEAFIKE…ALLEYEKHLR (92 aa). Residues 237 to 274 are disordered; that stretch reads ELNLPGSASLPSSGIEKEASSHQASGSGRTRRDAAARA. One can recognise a sHSP domain in the interval 336–434; sequence AEVIDVGPPA…RLFVRVPFEQ (99 aa).

This sequence belongs to the small heat shock protein (HSP20) family.

It is found in the nucleus. This is AT-rich interactive domain-containing protein 5 (ARID5) from Arabidopsis thaliana (Mouse-ear cress).